Here is a 264-residue protein sequence, read N- to C-terminus: Acid phosphatase (264 aa).

The first 28 residues, 1–28 (MIKVPRFICMIALTSGILASGLSQSVSA), serve as a signal peptide directing secretion.

Belongs to the class A bacterial acid phosphatase family. It depends on Mg(2+) as a cofactor. Zn(2+) serves as cofactor.

Its subcellular location is the periplasm. The enzyme catalyses a phosphate monoester + H2O = an alcohol + phosphate. This chain is Acid phosphatase (phoC), found in Zymomonas mobilis subsp. mobilis (strain ATCC 31821 / ZM4 / CP4).